The following is a 187-amino-acid chain: Troponin I, slow skeletal muscle (187 aa).

Proline 2 carries the post-translational modification N-acetylproline. An involved in binding TNC region spans residues 2–48 (PEVERKSKITASRKLMLKSLMLAKAKECWEQEHEEREAEKVRYLSER). At serine 58 the chain carries Phosphoserine. The tract at residues 97 to 118 (LKLKVLDLRGKFKRPPLRRVRV) is involved in binding TNC and actin.

It belongs to the troponin I family. Binds to actin and tropomyosin.

In terms of biological role, troponin I is the inhibitory subunit of troponin, the thin filament regulatory complex which confers calcium-sensitivity to striated muscle actomyosin ATPase activity. In Mus musculus (Mouse), this protein is Troponin I, slow skeletal muscle (Tnni1).